Consider the following 390-residue polypeptide: S-adenosylmethionine synthase 1 (390 aa).

Residue glutamate 9 coordinates Mg(2+). Histidine 15 provides a ligand contact to ATP. Residue glutamate 43 participates in K(+) binding. Residues glutamate 56 and glutamine 99 each coordinate L-methionine. ATP contacts are provided by residues 167-169 (DGK), 235-238 (SGRF), aspartate 246, 252-253 (RK), alanine 269, lysine 273, and lysine 277. Residue aspartate 246 coordinates L-methionine. Residue lysine 277 participates in L-methionine binding.

This sequence belongs to the AdoMet synthase family. As to quaternary structure, homotetramer. Mn(2+) is required as a cofactor. Requires Mg(2+) as cofactor. Co(2+) serves as cofactor. The cofactor is K(+).

The protein localises to the cytoplasm. The catalysed reaction is L-methionine + ATP + H2O = S-adenosyl-L-methionine + phosphate + diphosphate. Its pathway is amino-acid biosynthesis; S-adenosyl-L-methionine biosynthesis; S-adenosyl-L-methionine from L-methionine: step 1/1. Its function is as follows. Catalyzes the formation of S-adenosylmethionine from methionine and ATP. The reaction comprises two steps that are both catalyzed by the same enzyme: formation of S-adenosylmethionine (AdoMet) and triphosphate, and subsequent hydrolysis of the triphosphate. In Nicotiana tabacum (Common tobacco), this protein is S-adenosylmethionine synthase 1 (SAMS1).